Consider the following 115-residue polypeptide: U3-lycotoxin-Ls1o (115 aa).

The first 20 residues, 1–20 (MKFVLLFGVLLVTLFSYSSA), serve as a signal peptide directing secretion. The propeptide occupies 21–44 (EMLDDFDQADEDELLSLIEKEEAR). 4 cysteine pairs are disulfide-bonded: cysteine 48–cysteine 63, cysteine 55–cysteine 72, cysteine 62–cysteine 87, and cysteine 74–cysteine 85.

This sequence belongs to the neurotoxin 19 (CSTX) family. 01 subfamily. As to expression, expressed by the venom gland.

It is found in the secreted. This Lycosa singoriensis (Wolf spider) protein is U3-lycotoxin-Ls1o.